We begin with the raw amino-acid sequence, 202 residues long: Large ribosomal subunit protein bL17 (202 aa).

A disordered region spans residues 132-202 (DAAQKAASAG…TEVEKADDDK (71 aa)). Over residues 134–168 (AQKAASAGAQEVTAAAAPQAAVEPEAVETEASAET) the composition is skewed to low complexity. Positions 169 to 193 (AEAEVETAEVEAVDEASAEEADEAT) are enriched in acidic residues.

The protein belongs to the bacterial ribosomal protein bL17 family. In terms of assembly, part of the 50S ribosomal subunit. Contacts protein L32.

This Mycolicibacterium vanbaalenii (strain DSM 7251 / JCM 13017 / BCRC 16820 / KCTC 9966 / NRRL B-24157 / PYR-1) (Mycobacterium vanbaalenii) protein is Large ribosomal subunit protein bL17.